The following is a 296-amino-acid chain: uncharacterized protein (296 aa).

Residues M1–V57 constitute a chloroplast transit peptide.

It belongs to the NAD(P)-dependent epimerase/dehydratase family.

It is found in the plastid. It localises to the chloroplast. Its subcellular location is the plastoglobule. This is an uncharacterized protein from Arabidopsis thaliana (Mouse-ear cress).